Reading from the N-terminus, the 212-residue chain is Large ribosomal subunit protein uL3 (212 aa).

The segment at 136–155 (THGNSLSHRSNGSIGQNQTP) is disordered. Position 153 is an N5-methylglutamine (glutamine 153).

Belongs to the universal ribosomal protein uL3 family. In terms of assembly, part of the 50S ribosomal subunit. Forms a cluster with proteins L14 and L19. Methylated by PrmB.

One of the primary rRNA binding proteins, it binds directly near the 3'-end of the 23S rRNA, where it nucleates assembly of the 50S subunit. The sequence is that of Large ribosomal subunit protein uL3 from Shewanella baltica (strain OS223).